Here is a 277-residue protein sequence, read N- to C-terminus: Large ribosomal subunit protein uL2 (277 aa).

A disordered region spans residues 219–277; sequence TVRGSVMNPNDHPHGGGEGKAPVGRKAPSTPWGKPALGLKTRNKKAKSDKLIVRRRNQK.

Belongs to the universal ribosomal protein uL2 family. Part of the 50S ribosomal subunit. Forms a bridge to the 30S subunit in the 70S ribosome.

Functionally, one of the primary rRNA binding proteins. Required for association of the 30S and 50S subunits to form the 70S ribosome, for tRNA binding and peptide bond formation. It has been suggested to have peptidyltransferase activity; this is somewhat controversial. Makes several contacts with the 16S rRNA in the 70S ribosome. The protein is Large ribosomal subunit protein uL2 of Streptococcus suis (strain 98HAH33).